The chain runs to 417 residues: MAEIKNYTLNFGPQHPAAHGVLRLVLELDGEVIQRADPHIGLLHRATEKLAESKTFIQSVPYMDRLDYVSMMVNEHGYVLAIEKLLGIEVPERAQYIRVLFDEITRVLNHLMWIGAHALDVGAMAVFLYAFREREDLMDVYEAVSGARMHAAYYRPGGVYRDLPDAMPQYKASKIRNEKALAKMNEARSGSVLDFIDDFFARFPKCVDEYETLLTDNRIWKQRLVGIGVVSPERALQMGLTGPMLRGSGIAWDLRKKQPYEVYDRMDFDVPVGVNGDCYDRYLVRVEEMRQSIRIAKQCIEWLRKNPGPVMTDNHKVAPPSRVGMKTNMEDLIHHFKLFTEGFHVPEGEAYAAVEHPKGEFGIYLVSDGANKPYRLKIRAPGFAHLASLDEMARGHMIADAVTIIGTQDIVFGEIDR.

Belongs to the complex I 49 kDa subunit family. As to quaternary structure, NDH-1 is composed of 14 different subunits. Subunits NuoB, C, D, E, F, and G constitute the peripheral sector of the complex.

The protein resides in the cell inner membrane. It catalyses the reaction a quinone + NADH + 5 H(+)(in) = a quinol + NAD(+) + 4 H(+)(out). Functionally, NDH-1 shuttles electrons from NADH, via FMN and iron-sulfur (Fe-S) centers, to quinones in the respiratory chain. The immediate electron acceptor for the enzyme in this species is believed to be ubiquinone. Couples the redox reaction to proton translocation (for every two electrons transferred, four hydrogen ions are translocated across the cytoplasmic membrane), and thus conserves the redox energy in a proton gradient. The chain is NADH-quinone oxidoreductase subunit D from Burkholderia lata (strain ATCC 17760 / DSM 23089 / LMG 22485 / NCIMB 9086 / R18194 / 383).